The primary structure comprises 126 residues: Small ribosomal subunit protein uS12 (126 aa).

Positions 1–28 are disordered; that stretch reads MPTINQLVRKGRQSETTKSKSPALQDCP. Asp89 is modified (3-methylthioaspartic acid). A disordered region spans residues 103–126; sequence DTQGVKDRKQARSKYGAKRAKAGK. Positions 113–126 are enriched in basic residues; it reads ARSKYGAKRAKAGK.

It belongs to the universal ribosomal protein uS12 family. Part of the 30S ribosomal subunit. Contacts proteins S8 and S17. May interact with IF1 in the 30S initiation complex.

In terms of biological role, with S4 and S5 plays an important role in translational accuracy. Its function is as follows. Interacts with and stabilizes bases of the 16S rRNA that are involved in tRNA selection in the A site and with the mRNA backbone. Located at the interface of the 30S and 50S subunits, it traverses the body of the 30S subunit contacting proteins on the other side and probably holding the rRNA structure together. The combined cluster of proteins S8, S12 and S17 appears to hold together the shoulder and platform of the 30S subunit. This Paraburkholderia phytofirmans (strain DSM 17436 / LMG 22146 / PsJN) (Burkholderia phytofirmans) protein is Small ribosomal subunit protein uS12.